The primary structure comprises 158 residues: Endoribonuclease YbeY (158 aa).

The Zn(2+) site is built by His118, His122, and His128.

It belongs to the endoribonuclease YbeY family. It depends on Zn(2+) as a cofactor.

It is found in the cytoplasm. Single strand-specific metallo-endoribonuclease involved in late-stage 70S ribosome quality control and in maturation of the 3' terminus of the 16S rRNA. This Bartonella bacilliformis (strain ATCC 35685 / KC583 / Herrer 020/F12,63) protein is Endoribonuclease YbeY.